Consider the following 330-residue polypeptide: Phosphatidylglycerol--prolipoprotein diacylglyceryl transferase (330 aa).

The next 3 membrane-spanning stretches (helical) occupy residues 22–42, 57–77, and 97–117; these read LPIR…LVVG, YDIA…YHLA, and IWDG…GAWL. Arginine 145 is an a 1,2-diacyl-sn-glycero-3-phospho-(1'-sn-glycerol) binding site. 2 helical membrane-spanning segments follow: residues 193-213 and 257-277; these read VVQP…FALI and INSF…ILAP.

This sequence belongs to the Lgt family.

It localises to the cell membrane. It carries out the reaction L-cysteinyl-[prolipoprotein] + a 1,2-diacyl-sn-glycero-3-phospho-(1'-sn-glycerol) = an S-1,2-diacyl-sn-glyceryl-L-cysteinyl-[prolipoprotein] + sn-glycerol 1-phosphate + H(+). It functions in the pathway protein modification; lipoprotein biosynthesis (diacylglyceryl transfer). Functionally, catalyzes the transfer of the diacylglyceryl group from phosphatidylglycerol to the sulfhydryl group of the N-terminal cysteine of a prolipoprotein, the first step in the formation of mature lipoproteins. This is Phosphatidylglycerol--prolipoprotein diacylglyceryl transferase from Mycobacterium leprae (strain Br4923).